Consider the following 345-residue polypeptide: Dihydroorotate dehydrogenase (quinone) (345 aa).

FMN contacts are provided by residues 65-69 (AGLDK) and T89. K69 is a substrate binding site. Substrate is bound at residue 114–118 (NRMGF). Residues N142 and N175 each contribute to the FMN site. N175 lines the substrate pocket. S178 (nucleophile) is an active-site residue. N180 provides a ligand contact to substrate. The FMN site is built by K220 and T248. 249–250 (NT) contributes to the substrate binding site. Residues G271, G300, and 321–322 (YT) each bind FMN.

Belongs to the dihydroorotate dehydrogenase family. Type 2 subfamily. Monomer. FMN is required as a cofactor.

The protein resides in the cell membrane. The enzyme catalyses (S)-dihydroorotate + a quinone = orotate + a quinol. It participates in pyrimidine metabolism; UMP biosynthesis via de novo pathway; orotate from (S)-dihydroorotate (quinone route): step 1/1. Its function is as follows. Catalyzes the conversion of dihydroorotate to orotate with quinone as electron acceptor. In Burkholderia cenocepacia (strain ATCC BAA-245 / DSM 16553 / LMG 16656 / NCTC 13227 / J2315 / CF5610) (Burkholderia cepacia (strain J2315)), this protein is Dihydroorotate dehydrogenase (quinone).